Reading from the N-terminus, the 250-residue chain is 3-deoxy-manno-octulosonate cytidylyltransferase (250 aa).

It belongs to the KdsB family.

The protein resides in the cytoplasm. The catalysed reaction is 3-deoxy-alpha-D-manno-oct-2-ulosonate + CTP = CMP-3-deoxy-beta-D-manno-octulosonate + diphosphate. It functions in the pathway nucleotide-sugar biosynthesis; CMP-3-deoxy-D-manno-octulosonate biosynthesis; CMP-3-deoxy-D-manno-octulosonate from 3-deoxy-D-manno-octulosonate and CTP: step 1/1. Its pathway is bacterial outer membrane biogenesis; lipopolysaccharide biosynthesis. Its function is as follows. Activates KDO (a required 8-carbon sugar) for incorporation into bacterial lipopolysaccharide in Gram-negative bacteria. The chain is 3-deoxy-manno-octulosonate cytidylyltransferase from Legionella pneumophila subsp. pneumophila (strain Philadelphia 1 / ATCC 33152 / DSM 7513).